The sequence spans 242 residues: Aquaporin (242 aa).

Residues methionine 1–lysine 11 lie on the Cytoplasmic side of the membrane. A helical membrane pass occupies residues leucine 12 to asparagine 32. Residues threonine 33–serine 39 are Extracellular-facing. A helical transmembrane segment spans residues isoleucine 40–phenylalanine 60. Residues cysteine 61–aspartate 83 lie on the Cytoplasmic side of the membrane. Positions asparagine 69 to alanine 71 match the NPA motif. The chain crosses the membrane as a helical span at residues isoleucine 84 to leucine 104. Residues threonine 105 to asparagine 133 lie on the Extracellular side of the membrane. Residues leucine 134–isoleucine 154 traverse the membrane as a helical segment. Residues asparagine 155 to lysine 175 lie on the Cytoplasmic side of the membrane. A helical membrane pass occupies residues phenylalanine 176–serine 196. The Extracellular segment spans residues glycine 197–aspartate 217. Positions asparagine 201 to glycine 203 match the NPG motif. A helical transmembrane segment spans residues phenylalanine 218 to phenylalanine 238. At leucine 239–lysine 242 the chain is on the cytoplasmic side.

Belongs to the MIP/aquaporin (TC 1.A.8) family.

It localises to the cell membrane. Water channel required to facilitate the transport of water across membranes. Involved in osmotolerance. In Enterocytozoon bieneusi (strain H348) (Microsporidian parasite), this protein is Aquaporin (AQP).